The following is a 331-amino-acid chain: Glycerophosphodiester phosphodiesterase 1 (331 aa).

The Cytoplasmic segment spans residues 1-3 (MWL). A helical membrane pass occupies residues 4–24 (WEDQGGLLGPFSFVLVLLLVV). Topologically, residues 25 to 248 (TRSPFNACVL…PRYSVFWKQS (224 aa)) are lumenal. A GP-PDE domain is found at 65–331 (VSAIAHRGGS…SMLEDCAPHF (267 aa)). Mg(2+) contacts are provided by Glu97 and Asp99. A glycan (N-linked (GlcNAc...) asparagine) is linked at Asn168. A Mg(2+)-binding site is contributed by Asp174. Residues 249–269 (VFVVLDILLDWSMHNVLWYLC) traverse the membrane as a helical segment. Residues 270–331 (GISAFLMQKD…SMLEDCAPHF (62 aa)) lie on the Cytoplasmic side of the membrane.

Belongs to the glycerophosphoryl diester phosphodiesterase family. In terms of assembly, interacts with PRAF2. Interacts with RGS16. Mg(2+) is required as a cofactor. Post-translationally, N-glycosylated. As to expression, detected in heart, brain, lung, liver, skeletal muscle, kidney, pituitary and testis.

It localises to the cell membrane. The protein localises to the cytoplasmic vesicle membrane. It catalyses the reaction sn-glycero-3-phospho-1D-myo-inositol + H2O = myo-inositol + sn-glycerol 3-phosphate + H(+). The catalysed reaction is 1-O-(1Z-octadecenyl)-sn-glycero-3-phospho-(N-5Z,8Z,11Z,14Z-eicosatetraenoyl)-ethanolamine + H2O = 1-O-(1Z-octadecenyl)-sn-glycero-3-phosphate + N-(5Z,8Z,11Z,14Z-eicosatetraenoyl)-ethanolamine + H(+). The enzyme catalyses 1-O-(1Z-octadecenyl)-sn-glycero-3-phospho-(N-9Z-octadecenoyl)-ethanolamine + H2O = 1-O-(1Z-octadecenyl)-sn-glycero-3-phosphate + N-(9Z-octadecenoyl) ethanolamine + H(+). It carries out the reaction 1-O-(1Z-octadecenyl)-sn-glycero-3-phospho-N-hexadecanoyl-ethanolamine + H2O = 1-O-(1Z-octadecenyl)-sn-glycero-3-phosphate + N-hexadecanoylethanolamine + H(+). It catalyses the reaction N-(4Z,7Z,10Z,13Z,16Z,19Z)-docosahexaenoyl-sn-glycero-3-phosphoethanolamine + H2O = N-(4Z,7Z,10Z,13Z,16Z,19Z)-docosahexaenoyl ethanolamine + sn-glycerol 3-phosphate + H(+). The catalysed reaction is N-eicosanoyl-sn-glycero-3-phosphoethanolamine + H2O = N-eicosanoyl ethanolamine + sn-glycerol 3-phosphate + H(+). The enzyme catalyses N-hexadecanoyl-sn-glycero-3-phosphoethanolamine + H2O = N-hexadecanoylethanolamine + sn-glycerol 3-phosphate + H(+). It carries out the reaction N-(9Z-octadecenoyl)-sn-glycero-3-phosphoethanolamine + H2O = N-(9Z-octadecenoyl) ethanolamine + sn-glycerol 3-phosphate + H(+). It catalyses the reaction N-(5Z,8Z,11Z,14Z-eicosatetraenoyl)-sn-glycero-3-phosphoethanolamine + H2O = N-(5Z,8Z,11Z,14Z-eicosatetraenoyl)-ethanolamine + sn-glycerol 3-phosphate + H(+). Its activity is regulated as follows. Inhibited by EDTA, calcium chloride, and zinc chloride. Enhanced by magnesium chloride. Glycerophosphodiester phosphodiesterase activity can be modulated by G-protein signaling pathways. Functionally, hydrolyzes the phosphodiester bond of glycerophosphodiesters such as glycerophosphoinositol (GroPIns) and glycerophosphoethanolamine (GroPEth), to yield a glycerol phosphate and an alcohol. Hydrolyzes glycerophospho-N-acylethanolamines to N-acylethanolamines in the brain and participates in bioactive N-acylethanolamine biosynthesis such as anandamide (an endocannabinoid), N-palmitoylethanolamine (an anti-inflammatory), and N-oleoylethanolamine (an anorexic). In addition, has a lysophospholipase D activity by hydrolyzing N-acyl-lysoplasmenylethanolamine (N-acyl-lysoPlsEt) to N-acylethanolamine. However lysophospholipase D activity is lower than glycerophosphodiester phosphodiesterase activity. Has little or no activity towards glycerophosphocholine. The polypeptide is Glycerophosphodiester phosphodiesterase 1 (Rattus norvegicus (Rat)).